The primary structure comprises 327 residues: Cytochrome f (327 aa).

Positions 1–24 are cleaved as a signal peptide; that stretch reads MKRIYLALCALLLLLGTGSRPAAA. Residues tyrosine 25, cysteine 45, cysteine 48, and histidine 49 each coordinate heme. Residues 293–313 traverse the membrane as a helical segment; it reads VKWLVAFLAAVAITQLLLVLK.

This sequence belongs to the cytochrome f family. In terms of assembly, the 4 large subunits of the cytochrome b6-f complex are cytochrome b6, subunit IV (17 kDa polypeptide, PetD), cytochrome f and the Rieske protein, while the 4 small subunits are PetG, PetL, PetM and PetN. The complex functions as a dimer. Requires heme as cofactor.

The protein resides in the cellular thylakoid membrane. Component of the cytochrome b6-f complex, which mediates electron transfer between photosystem II (PSII) and photosystem I (PSI), cyclic electron flow around PSI, and state transitions. The polypeptide is Cytochrome f (Synechococcus sp. (strain JA-3-3Ab) (Cyanobacteria bacterium Yellowstone A-Prime)).